Reading from the N-terminus, the 239-residue chain is Uridylate kinase (239 aa).

ATP is bound at residue 10–13; it reads KLSG. The segment at 18–23 is involved in allosteric activation by GTP; sequence GEDGYG. Glycine 52 serves as a coordination point for UMP. Residues glycine 53 and arginine 57 each contribute to the ATP site. Residues aspartate 72 and 133 to 140 contribute to the UMP site; that span reads TGNPYFTT. Residues threonine 160, tyrosine 166, and aspartate 169 each contribute to the ATP site.

Belongs to the UMP kinase family. In terms of assembly, homohexamer.

Its subcellular location is the cytoplasm. The enzyme catalyses UMP + ATP = UDP + ADP. It participates in pyrimidine metabolism; CTP biosynthesis via de novo pathway; UDP from UMP (UMPK route): step 1/1. Its activity is regulated as follows. Allosterically activated by GTP. Inhibited by UTP. Its function is as follows. Catalyzes the reversible phosphorylation of UMP to UDP. The chain is Uridylate kinase from Chlorobium chlorochromatii (strain CaD3).